We begin with the raw amino-acid sequence, 101 residues long: Large ribosomal subunit protein P1 (101 aa).

The tract at residues 65–89 (AAPAAAPAEEPKEEKKEEKKEEDTT) is disordered. Residues 73-87 (EEPKEEKKEEKKEED) show a composition bias toward basic and acidic residues.

Belongs to the eukaryotic ribosomal protein P1/P2 family. As to quaternary structure, part of the 50S ribosomal subunit. Homodimer, it forms part of the ribosomal stalk which helps the ribosome interact with GTP-bound translation factors. Forms a heptameric uL10/P0(P1)2(P1)2(P1)2 complex, where uL10/P0 forms an elongated spine to which the P1 dimers bind in a sequential fashion.

Functionally, forms part of the ribosomal stalk, playing a central role in the interaction of the ribosome with GTP-bound translation factors. The chain is Large ribosomal subunit protein P1 from Methanothermococcus thermolithotrophicus (Methanococcus thermolithotrophicus).